Consider the following 251-residue polypeptide: ATP synthase subunit a (251 aa).

5 consecutive transmembrane segments (helical) span residues 34–54 (VFLT…AASS), 93–113 (FVGT…LVPF), 130–150 (INTT…AGFS), 195–215 (LVVG…VMAL), and 216–236 (GLFT…AYIG).

Belongs to the ATPase A chain family. As to quaternary structure, F-type ATPases have 2 components, CF(1) - the catalytic core - and CF(0) - the membrane proton channel. CF(1) has five subunits: alpha(3), beta(3), gamma(1), delta(1), epsilon(1). CF(0) has four main subunits: a, b, b' and c.

It is found in the cellular thylakoid membrane. Its function is as follows. Key component of the proton channel; it plays a direct role in the translocation of protons across the membrane. This chain is ATP synthase subunit a, found in Nostoc sp. (strain PCC 7120 / SAG 25.82 / UTEX 2576).